We begin with the raw amino-acid sequence, 336 residues long: uncharacterized protein (336 aa).

The interval 162–195 is disordered; sequence ARGLPVHSSFKQNNSSQTSSNKGTTTVAAGSGSD. Residues 169–187 show a composition bias toward low complexity; it reads SSFKQNNSSQTSSNKGTTT.

It belongs to the AHA1 family.

This is an uncharacterized protein from Schizosaccharomyces pombe (strain 972 / ATCC 24843) (Fission yeast).